Consider the following 231-residue polypeptide: MQDVFRQIDWERYELIPTIVQEKQSQQILMLAYSSKQSLELSLQTHLAHYFSRSKQRIWQKGEQSGHIQHIKEVKLDCDNDSLIFIVEQVGVACHTGEKSCFFRIFSLDKNCQNPPVSMPQKYPIGVYHILDDLYHIIEQRRCENIEHSYTASLLAKGVNGIGKKIIEEAGELCFALKDKDEKAIIYECADLFYHILVGLALEHITPERVLQELRRRMGQSGIEEKASRKH.

The phosphoribosyl-AMP cyclohydrolase stretch occupies residues 1 to 130 (MQDVFRQIDW…QKYPIGVYHI (130 aa)). The tract at residues 131–231 (LDDLYHIIEQ…GIEEKASRKH (101 aa)) is phosphoribosyl-ATP pyrophosphohydrolase.

The protein in the N-terminal section; belongs to the PRA-CH family. It in the C-terminal section; belongs to the PRA-PH family.

Its subcellular location is the cytoplasm. It carries out the reaction 1-(5-phospho-beta-D-ribosyl)-ATP + H2O = 1-(5-phospho-beta-D-ribosyl)-5'-AMP + diphosphate + H(+). The catalysed reaction is 1-(5-phospho-beta-D-ribosyl)-5'-AMP + H2O = 1-(5-phospho-beta-D-ribosyl)-5-[(5-phospho-beta-D-ribosylamino)methylideneamino]imidazole-4-carboxamide. It functions in the pathway amino-acid biosynthesis; L-histidine biosynthesis; L-histidine from 5-phospho-alpha-D-ribose 1-diphosphate: step 2/9. The protein operates within amino-acid biosynthesis; L-histidine biosynthesis; L-histidine from 5-phospho-alpha-D-ribose 1-diphosphate: step 3/9. The sequence is that of Histidine biosynthesis bifunctional protein HisIE from Helicobacter hepaticus (strain ATCC 51449 / 3B1).